Here is a 66-residue protein sequence, read N- to C-terminus: 14-3-3-like protein 2 (66 aa).

The protein belongs to the 14-3-3 family.

This is 14-3-3-like protein 2 from Pseudotsuga menziesii (Douglas-fir).